A 353-amino-acid chain; its full sequence is Chorismate synthase (353 aa).

NADP(+) contacts are provided by arginine 48 and arginine 54. FMN is bound by residues 125–127 (RSS), 238–239 (NA), glycine 278, 293–297 (KPTSS), and arginine 319.

Belongs to the chorismate synthase family. Homotetramer. FMNH2 serves as cofactor.

The catalysed reaction is 5-O-(1-carboxyvinyl)-3-phosphoshikimate = chorismate + phosphate. The protein operates within metabolic intermediate biosynthesis; chorismate biosynthesis; chorismate from D-erythrose 4-phosphate and phosphoenolpyruvate: step 7/7. In terms of biological role, catalyzes the anti-1,4-elimination of the C-3 phosphate and the C-6 proR hydrogen from 5-enolpyruvylshikimate-3-phosphate (EPSP) to yield chorismate, which is the branch point compound that serves as the starting substrate for the three terminal pathways of aromatic amino acid biosynthesis. This reaction introduces a second double bond into the aromatic ring system. In Bordetella bronchiseptica (strain ATCC BAA-588 / NCTC 13252 / RB50) (Alcaligenes bronchisepticus), this protein is Chorismate synthase.